A 1119-amino-acid polypeptide reads, in one-letter code: Protein translocase subunit SecA (1119 aa).

ATP is bound by residues Q177, 195–199 (GEGKT), and D692. Positions 1025 to 1081 (APSIHEARQTKSKEKVETRKEEIPNMDERAAQSRAAGNTQRQQPEVTETIVRDRPKI) are disordered. Positions 1029 to 1055 (HEARQTKSKEKVETRKEEIPNMDERAA) are enriched in basic and acidic residues. The span at 1059–1070 (AAGNTQRQQPEV) shows a compositional bias: polar residues.

This sequence belongs to the SecA family. As to quaternary structure, monomer and homodimer. Part of the essential Sec protein translocation apparatus which comprises SecA, SecYEG and auxiliary proteins SecDF. Other proteins may also be involved.

Its subcellular location is the cell inner membrane. It localises to the cytoplasm. The catalysed reaction is ATP + H2O + cellular proteinSide 1 = ADP + phosphate + cellular proteinSide 2.. In terms of biological role, part of the Sec protein translocase complex. Interacts with the SecYEG preprotein conducting channel. Has a central role in coupling the hydrolysis of ATP to the transfer of proteins into and across the cell membrane, serving as an ATP-driven molecular motor driving the stepwise translocation of polypeptide chains across the membrane. The protein is Protein translocase subunit SecA of Christiangramia forsetii (strain DSM 17595 / CGMCC 1.15422 / KT0803) (Gramella forsetii).